A 313-amino-acid polypeptide reads, in one-letter code: Monoglyceride lipase (313 aa).

The GXSXG motif lies at 121-125 (GHSMG). Ser-123 serves as the catalytic Nucleophile. Active-site charge relay system residues include Asp-251 and His-281.

This sequence belongs to the AB hydrolase superfamily. Monoacylglycerol lipase family.

The protein resides in the lipid droplet. Its subcellular location is the cytoplasm. The protein localises to the endoplasmic reticulum. It localises to the mitochondrion outer membrane. It carries out the reaction Hydrolyzes glycerol monoesters of long-chain fatty acids.. It catalyses the reaction a fatty acid ethyl ester + H2O = ethanol + a fatty acid + H(+). The catalysed reaction is 1-(9Z-octadecenoyl)-glycerol + H2O = glycerol + (9Z)-octadecenoate + H(+). The enzyme catalyses 2-(9Z-octadecenoyl)-glycerol + H2O = glycerol + (9Z)-octadecenoate + H(+). It carries out the reaction 1-hexadecanoylglycerol + H2O = glycerol + hexadecanoate + H(+). It catalyses the reaction 2-hexadecanoylglycerol + H2O = glycerol + hexadecanoate + H(+). The catalysed reaction is ethyl hexadecanoate + H2O = ethanol + hexadecanoate + H(+). The enzyme catalyses ethyl (9Z)-octadecenoate + H2O = ethanol + (9Z)-octadecenoate + H(+). It carries out the reaction ethyl (9Z)-hexadecenoate + H2O = (9Z)-hexadecenoate + ethanol + H(+). It catalyses the reaction ethyl octadecanoate + H2O = ethanol + octadecanoate + H(+). The protein operates within glycerolipid metabolism; triacylglycerol degradation. In terms of biological role, converts monoacylglycerides (MAG) to free fatty acids and glycerol. Has a strong preference for monounsaturated monoglycerides. Required for efficient degradation of MAG, short-lived intermediates of glycerolipid metabolism which may also function as lipid signaling molecules. Controls inactivation of the signaling lipid N-palmitoylethanolamine (PEA). Involved in fatty acid ethyl ester (FAEE) catabolism. FAEEs are non-oxidative metabolites of ethanol that are transiently incorporated into lipid droplets (LDs). Their mobilization by LD-resident FAEE hydrolases facilitates a controlled metabolism of these potentially toxic lipid metabolites. The sequence is that of Monoglyceride lipase (YJU3) from Saccharomyces cerevisiae (strain ATCC 204508 / S288c) (Baker's yeast).